The following is a 1494-amino-acid chain: Methyl-CpG-binding domain protein 5 (1494 aa).

An MBD domain is found at 11 to 81 (DKEGGLPAIQ…KVFNFDPGAA (71 aa)). A required for interaction with ASXL1/2/3 region spans residues 57 to 68 (DGTCKCGLECPL). 8 disordered regions span residues 123 to 152 (LVLT…RNKS), 200 to 274 (RQRL…TPLS), 329 to 350 (HHKP…QKKP), 450 to 522 (IGRI…KDIP), 594 to 641 (LAGN…QSGR), 809 to 848 (PNPP…SSSI), 1154 to 1173 (HDGR…LDHG), and 1345 to 1375 (VNGC…SNEL). Positions 333–343 (PQGPPPPPPPS) are enriched in pro residues. Low complexity-rich tracts occupy residues 499-511 (SPRP…PSTK) and 594-612 (LAGN…AGSG). Composition is skewed to polar residues over residues 614–624 (TEGHSTLNTMF) and 813–835 (QSRI…YNQT). The span at 836 to 848 (SSEAGGSGPSSSI) shows a compositional bias: low complexity. The 25-residue stretch at 1385–1409 (VGDLVWGQIKGLTSWPGKLVREDDV) folds into the PWWP domain. The interval 1468–1494 (MSGTVHQIPQGDRQMRPPKPKRRKISR) is disordered. Residues 1483–1494 (RPPKPKRRKISR) are compositionally biased toward basic residues.

Core component of the polycomb repressive deubiquitinase (PR-DUB) complex, at least composed of BAP1, one of ASXL1, ASXL2 or (probably) ASXL3, and one of MBD5 or MBD6. Distinct combinations of ASXL and MBD proteins may preferentially bind specific histone modification marks. The PR-DUB core associates with a number of accessory proteins, including FOXK1, FOXK2, KDM1B, HCFC1 and OGT; KDM1B specifically associates with ASXL2 PR-DUB complexes. Interacts (via MBD domain) with ASXL1, ASXL2 and ASXL3 (via PHD domain); the interaction is probably direct, mediates association with other PR-DUB complex core components. As to expression, detected in heart, placenta, liver, skeletal muscle, kidney and pancreas.

It is found in the nucleus. Its subcellular location is the chromosome. Functionally, non-catalytic component of the polycomb repressive deubiquitinase (PR-DUB) complex, a complex that specifically mediates deubiquitination of histone H2A monoubiquitinated at 'Lys-120' (H2AK119ub1). Important for stability of PR-DUB components and stimulating its ubiquitinase activity. As part of the PR-DUB complex, associates with chromatin enriched in histone marks H3K4me1, H3K4me3, and H3K27Ac, but not in H3K27me3. The PR-DUB complex is an epigenetic regulator of gene expression, including genes involved in cell growth and survivability. MBD5 and MBD6 containing complexes associate with distinct chromatin regions enriched in genes involved in different pathways. Heterochromatin recruitment is not mediated by DNA methylation. The PR-DUB complex is an epigenetic regulator of gene expression, including genes involved in development, cell communication, signaling, cell proliferation and cell viability. The polypeptide is Methyl-CpG-binding domain protein 5 (MBD5) (Homo sapiens (Human)).